The chain runs to 466 residues: MSNSDYLPDYPLNSDLVKRLKSALDAKDEERVRDLICTEITPVDAVIELANDDWMKDPSAQLPTGMLLGDLDHLKPLMDQFFQDANVVFEINKDEMEWQVKSPATFGLSGLWTLEYKRELTTPLCIAAAHGHTACVRHLLGRGADPDASPGGRGALHEACLGGHTACVRLLLQHRADPDLLSAEGLAPLHLCRTAASLGCAQALLEHGASVQRVGGTGRDTPLHVAAQRGLDEHARLYLGRGAHVDARNGRGETALSAACGAARRPDEHGRCLRLCALLLRRGAEADARDEDERSPLHKACGHASHSLARLLLRHGADAGALDYGGASPLGRVLQTASCALQASPQRTVQALLNHGSPTVWPDAFPKVLKTCASVPAVIEVLFNSYPQLCLSESWKEVIPEEVFQMHKPFYQSLFALALTPRCLQHLCRCALRRLFGKRCFDLIPLLPLPKPLQNYLLLEPQGVLH.

6 ANK repeats span residues 119-148, 151-180, 184-213, 218-247, 251-288, and 292-321; these read ELTT…DPDA, GGRG…DPDL, EGLA…SVQR, GRDT…HVDA, RGET…EADA, and DERS…DAGA. Residues 405 to 463 form the SOCS box domain; sequence QMHKPFYQSLFALALTPRCLQHLCRCALRRLFGKRCFDLIPLLPLPKPLQNYLLLEPQG.

The protein belongs to the ankyrin SOCS box (ASB) family.

The protein operates within protein modification; protein ubiquitination. May be a substrate-recognition component of a SCF-like ECS (Elongin-Cullin-SOCS-box protein) E3 ubiquitin-protein ligase complex which mediates the ubiquitination and subsequent proteasomal degradation of target proteins. This Homo sapiens (Human) protein is Ankyrin repeat and SOCS box protein 18 (ASB18).